The following is a 547-amino-acid chain: Chaperonin GroEL (547 aa).

ATP contacts are provided by residues 30 to 33, lysine 51, 87 to 91, glycine 415, and aspartate 495; these read TLGP and DGTTT.

This sequence belongs to the chaperonin (HSP60) family. As to quaternary structure, forms a cylinder of 14 subunits composed of two heptameric rings stacked back-to-back. Interacts with the co-chaperonin GroES.

Its subcellular location is the cytoplasm. It catalyses the reaction ATP + H2O + a folded polypeptide = ADP + phosphate + an unfolded polypeptide.. Functionally, together with its co-chaperonin GroES, plays an essential role in assisting protein folding. The GroEL-GroES system forms a nano-cage that allows encapsulation of the non-native substrate proteins and provides a physical environment optimized to promote and accelerate protein folding. The protein is Chaperonin GroEL of Aggregatibacter actinomycetemcomitans (Actinobacillus actinomycetemcomitans).